The chain runs to 322 residues: MEPTPEMKRNRLPSMNFEAEILADPHDNSELYVIPSMRSLTAEEYVEAFQSFLDHSTEHQCMDEFNKEVMPHIMAGLGNGKSTINILGVGSGTGEQDLKMIQILQAAHPGVLINNEIIEPNPQHVAAYKELVNRAPDLQGVSFTWHQLTSSEYEQQVKEKNTHKKFDFIHMIQMLYRVEDIPNTIKFFHSCLNHQGKLLIIILSDSSGWASLWKKYRHCLPSTDSGHYITSDSITAVLRKLGIKYHVYEFPSGWDITECFIEGDPAGGHMMDFLTGTKNFLGTAPAALRSRLQEALCQPECSSRKDGRVIFCNNLSMIVAES.

Glu58 contacts substrate. Residues Gly90, Glu119, Ser150, and Ile172 each contribute to the S-adenosyl-L-methionine site. Residue Asn313 coordinates substrate.

Belongs to the class I-like SAM-binding methyltransferase superfamily. HNMT family. Monomer.

It catalyses the reaction carnosine + S-adenosyl-L-methionine = anserine + S-adenosyl-L-homocysteine + H(+). N-methyltransferase that mediates the formation of anserine (beta-alanyl-N(Pi)-methyl-L-histidine) from carnosine. Anserine, a methylated derivative of carnosine (beta-alanyl-L-histidine), is an abundant constituent of vertebrate skeletal muscles. The protein is Carnosine N-methyltransferase 2 of Gallus gallus (Chicken).